The chain runs to 451 residues: UDP-N-acetyl-alpha-D-muramoyl-L-alanyl-L-glutamate epimerase (451 aa).

The protein belongs to the MurL family.

It carries out the reaction UDP-N-acetyl-alpha-D-muramoyl-L-alanyl-L-glutamate + ATP + H2O = UDP-N-acetyl-alpha-D-muramoyl-L-alanyl-D-glutamate + AMP + diphosphate + H(+). The protein operates within cell wall biogenesis; peptidoglycan biosynthesis. In terms of biological role, cell wall formation. Catalyzes epimerization of the terminal L-glutamate in UDP-N-acetyl-alpha-D-muramoyl-L-alanyl-L-glutamate. This is UDP-N-acetyl-alpha-D-muramoyl-L-alanyl-L-glutamate epimerase from Xanthomonas oryzae pv. oryzae (strain MAFF 311018).